The primary structure comprises 584 residues: 2-succinyl-5-enolpyruvyl-6-hydroxy-3-cyclohexene-1-carboxylate synthase (584 aa).

It belongs to the TPP enzyme family. MenD subfamily. In terms of assembly, homodimer. The cofactor is Mg(2+). Mn(2+) is required as a cofactor. Thiamine diphosphate serves as cofactor.

The catalysed reaction is isochorismate + 2-oxoglutarate + H(+) = 5-enolpyruvoyl-6-hydroxy-2-succinyl-cyclohex-3-ene-1-carboxylate + CO2. Its pathway is quinol/quinone metabolism; 1,4-dihydroxy-2-naphthoate biosynthesis; 1,4-dihydroxy-2-naphthoate from chorismate: step 2/7. It functions in the pathway quinol/quinone metabolism; menaquinone biosynthesis. Functionally, catalyzes the thiamine diphosphate-dependent decarboxylation of 2-oxoglutarate and the subsequent addition of the resulting succinic semialdehyde-thiamine pyrophosphate anion to isochorismate to yield 2-succinyl-5-enolpyruvyl-6-hydroxy-3-cyclohexene-1-carboxylate (SEPHCHC). This is 2-succinyl-5-enolpyruvyl-6-hydroxy-3-cyclohexene-1-carboxylate synthase from Bacillus cereus (strain ATCC 14579 / DSM 31 / CCUG 7414 / JCM 2152 / NBRC 15305 / NCIMB 9373 / NCTC 2599 / NRRL B-3711).